The primary structure comprises 267 residues: MHRIAVPAATGAQTAQAPVKVAARNLDFYYDKYHALKSINIEIPEKRVTALIGPSGCGKSTLLRIFNRIYALYPKMEARGEVLLDNENILSPKYPMNRLRSKVGMVFQKPVPFPMTIFENVAYGIRHHEKLSKADMQNRVEHALRQGALWDEVKDKLGQSALGLSGGQQQRLCIARAVALRPDVLLLDEPTSALDPISTSRIEQLVEELKRDYTIVIVTHNMQQAARVSDYTAFMYLGDLIEHDRTETIFSQPSKQQTEDYITGRFG.

An ABC transporter domain is found at 21–262; sequence VAARNLDFYY…PSKQQTEDYI (242 aa). An ATP-binding site is contributed by 53–60; the sequence is GPSGCGKS.

Belongs to the ABC transporter superfamily. Phosphate importer (TC 3.A.1.7) family. As to quaternary structure, the complex is composed of two ATP-binding proteins (PstB), two transmembrane proteins (PstC and PstA) and a solute-binding protein (PstS).

It localises to the cell inner membrane. The enzyme catalyses phosphate(out) + ATP + H2O = ADP + 2 phosphate(in) + H(+). Its function is as follows. Part of the ABC transporter complex PstSACB involved in phosphate import. Responsible for energy coupling to the transport system. This chain is Phosphate import ATP-binding protein PstB, found in Xanthomonas oryzae pv. oryzae (strain MAFF 311018).